We begin with the raw amino-acid sequence, 365 residues long: 3-isopropylmalate dehydrogenase (365 aa).

NAD(+) is bound at residue 80–91; sequence GPKWGTGSVRPE. Positions 98, 108, 137, and 226 each coordinate substrate. Mg(2+) is bound by residues Asp-226, Asp-251, and Asp-255. 290-301 contacts NAD(+); that stretch reads GSAPDLPKGKVN.

Belongs to the isocitrate and isopropylmalate dehydrogenases family. In terms of assembly, homodimer. It depends on Mg(2+) as a cofactor. The cofactor is Mn(2+).

It is found in the cytoplasm. The enzyme catalyses (2R,3S)-3-isopropylmalate + NAD(+) = 4-methyl-2-oxopentanoate + CO2 + NADH. It functions in the pathway amino-acid biosynthesis; L-leucine biosynthesis; L-leucine from 3-methyl-2-oxobutanoate: step 3/4. In terms of biological role, catalyzes the oxidation of 3-carboxy-2-hydroxy-4-methylpentanoate (3-isopropylmalate) to 3-carboxy-4-methyl-2-oxopentanoate. The product decarboxylates to 4-methyl-2 oxopentanoate. The sequence is that of 3-isopropylmalate dehydrogenase (LEU2) from Maudiozyma exigua (Yeast).